The primary structure comprises 320 residues: o-succinylbenzoate synthase (320 aa).

Catalysis depends on lysine 133, which acts as the Proton donor. Residues aspartate 161, glutamate 190, and aspartate 213 each contribute to the Mg(2+) site. Lysine 235 (proton acceptor) is an active-site residue.

Belongs to the mandelate racemase/muconate lactonizing enzyme family. MenC type 1 subfamily. Requires a divalent metal cation as cofactor.

It carries out the reaction (1R,6R)-6-hydroxy-2-succinyl-cyclohexa-2,4-diene-1-carboxylate = 2-succinylbenzoate + H2O. Its pathway is quinol/quinone metabolism; 1,4-dihydroxy-2-naphthoate biosynthesis; 1,4-dihydroxy-2-naphthoate from chorismate: step 4/7. It participates in quinol/quinone metabolism; menaquinone biosynthesis. Its function is as follows. Converts 2-succinyl-6-hydroxy-2,4-cyclohexadiene-1-carboxylate (SHCHC) to 2-succinylbenzoate (OSB). The polypeptide is o-succinylbenzoate synthase (Escherichia coli O17:K52:H18 (strain UMN026 / ExPEC)).